The primary structure comprises 244 residues: MINPFSSFRWRHSSRSPAGIPEVEPQPPDASDPFASQREQMVKKQLIKRGIRDPRVLEAMGKVPRHLFVPSDLRDRAYRDCPLPIGYGQTISQPYIVAFMTEAARLTPESVVLEIGTGSGYQAAVLAELARQVYSLERLSPLAAQAQQTLAALGYRNVEVRQGDGYQGWPEHAPYDAILVTAAPPTVPMVLLDQLAVGGTLVVPVGESPSDSGAQGSQSLLILCKTAQGWVQKGAFPVQFVPMV.

Residues 1–39 (MINPFSSFRWRHSSRSPAGIPEVEPQPPDASDPFASQRE) form a disordered region. Ser92 is a catalytic residue.

The protein belongs to the methyltransferase superfamily. L-isoaspartyl/D-aspartyl protein methyltransferase family.

It localises to the cytoplasm. The catalysed reaction is [protein]-L-isoaspartate + S-adenosyl-L-methionine = [protein]-L-isoaspartate alpha-methyl ester + S-adenosyl-L-homocysteine. In terms of biological role, catalyzes the methyl esterification of L-isoaspartyl residues in peptides and proteins that result from spontaneous decomposition of normal L-aspartyl and L-asparaginyl residues. It plays a role in the repair and/or degradation of damaged proteins. This is Protein-L-isoaspartate O-methyltransferase from Synechococcus sp. (strain JA-2-3B'a(2-13)) (Cyanobacteria bacterium Yellowstone B-Prime).